The chain runs to 89 residues: MVMTPEKKKEIIEGFKVHSADTGSPEVQIALLSERISYLTEHFKMHKKDHHSRRGLLKLVGQRRQLLNYLKKKNAERYNNVIERLGLRR.

Belongs to the universal ribosomal protein uS15 family. Part of the 30S ribosomal subunit. Forms a bridge to the 50S subunit in the 70S ribosome, contacting the 23S rRNA.

One of the primary rRNA binding proteins, it binds directly to 16S rRNA where it helps nucleate assembly of the platform of the 30S subunit by binding and bridging several RNA helices of the 16S rRNA. In terms of biological role, forms an intersubunit bridge (bridge B4) with the 23S rRNA of the 50S subunit in the ribosome. In Syntrophobacter fumaroxidans (strain DSM 10017 / MPOB), this protein is Small ribosomal subunit protein uS15.